The following is a 143-amino-acid chain: Envelope protein A28 homolog (143 aa).

The helical; Signal-anchor for type II membrane protein transmembrane segment at 1-21 (MNTVQILVVILITTALSFLVF) threads the bilayer. Residues 22 to 143 (QLWYYAENYE…LLRLLMANTS (122 aa)) lie on the Virion surface side of the membrane.

The protein belongs to the poxviridae A28 protein family. In terms of processing, contains two intramolecular disulfide bonds. They are created by the viral disulfide bond formation pathway, a poxvirus-specific pathway that operates on the cytoplasmic side of the MV membranes.

It localises to the virion membrane. Envelope protein required for virus entry into host cell and for cell-cell fusion (syncytium formation). The polypeptide is Envelope protein A28 homolog (Amsacta (AmEPV)).